A 235-amino-acid chain; its full sequence is ATP-dependent dethiobiotin synthetase BioD (235 aa).

Residue 12–17 coordinates ATP; that stretch reads GVGKTF. T16 provides a ligand contact to Mg(2+). Residue K37 is part of the active site. S41 contributes to the substrate binding site. ATP contacts are provided by residues D51, 112–115, and 202–204; these read EGAG and PKL. D51 and E112 together coordinate Mg(2+).

Belongs to the dethiobiotin synthetase family. Homodimer. Requires Mg(2+) as cofactor.

The protein resides in the cytoplasm. It catalyses the reaction (7R,8S)-7,8-diammoniononanoate + CO2 + ATP = (4R,5S)-dethiobiotin + ADP + phosphate + 3 H(+). It participates in cofactor biosynthesis; biotin biosynthesis; biotin from 7,8-diaminononanoate: step 1/2. Functionally, catalyzes a mechanistically unusual reaction, the ATP-dependent insertion of CO2 between the N7 and N8 nitrogen atoms of 7,8-diaminopelargonic acid (DAPA, also called 7,8-diammoniononanoate) to form a ureido ring. This is ATP-dependent dethiobiotin synthetase BioD from Bacillus licheniformis (strain ATCC 14580 / DSM 13 / JCM 2505 / CCUG 7422 / NBRC 12200 / NCIMB 9375 / NCTC 10341 / NRRL NRS-1264 / Gibson 46).